Consider the following 595-residue polypeptide: Actin-histidine N-methyltransferase (595 aa).

The tract at residues M1–P22 is disordered. Residues Q10–V20 show a composition bias toward polar residues. Residues R75, E104 to F106, R254, D275 to H279, and S325 to F327 each bind S-adenosyl-L-methionine. Residues E94–G314 form the SET domain. At S513 the chain carries Phosphoserine. Residues L552–K595 are disordered. The segment covering E573–K583 has biased composition (basic and acidic residues). Positions G584 to K595 are enriched in polar residues.

Belongs to the class V-like SAM-binding methyltransferase superfamily. SETD3 actin-histidine methyltransferase family. Interacts with MYOD1. Post-translationally, phosphorylated by GSK3B, which is required for recognition by the SCF(FBXW7) complex and subsequent degradation. In terms of processing, ubiquitinated by the SCF(FBXW7) complex following phosphorylation by GSK3B, leading to its degradation by the proteasome.

It is found in the cytoplasm. The protein resides in the nucleus. It catalyses the reaction L-histidyl-[protein] + S-adenosyl-L-methionine = N(tele)-methyl-L-histidyl-[protein] + S-adenosyl-L-homocysteine + H(+). Protein-histidine N-methyltransferase that specifically mediates 3-methylhistidine (tele-methylhistidine) methylation of actin at 'His-73'. Histidine methylation of actin is required for smooth muscle contraction of the laboring uterus during delivery. Does not have protein-lysine N-methyltransferase activity and probably only catalyzes histidine methylation of actin. The protein is Actin-histidine N-methyltransferase of Otolemur garnettii (Small-eared galago).